The sequence spans 78 residues: uncharacterized protein (78 aa).

2 helical membrane passes run 7–27 and 41–61; these read ICLV…FFQF and LSRI…GLLF.

It localises to the cell membrane. This is an uncharacterized protein from Bacillus subtilis (strain 168).